The chain runs to 282 residues: MIEQRPVSNLIGHLILILGIIIVAFPIYYTFVASSMTSTQIIRPPISLLPGDHLVENYREAIFGGVERVVGVSLERLLWNSFVVAMAIAVGKIIISFMSAFAIVFFRFPMRMFFFWMIFITLMLPVEVRILPTYKVIVDLGMIDTYAGLTLPLMASATATFLFRQFFLTIPGELVEAARIDNAGPFRFMRDILLPLSKTNIAALFVILFIYGWTQYLWPLLVTNDAKMNTIIIGLRRMVDWADASTPWNYVMVTAILAIIPLILVVVLMQRWFVKGLVETEK.

A run of 6 helical transmembrane segments spans residues 14–34 (LILI…FVAS), 86–106 (MAIA…IVFF), 112–132 (MFFF…RILP), 146–168 (YAGL…QFFL), 201–221 (IAAL…WPLL), and 248–268 (WNYV…VVVL). Residues 78–269 (LWNSFVVAMA…IPLILVVVLM (192 aa)) enclose the ABC transmembrane type-1 domain.

The protein belongs to the binding-protein-dependent transport system permease family. As to quaternary structure, the complex is composed of two ATP-binding proteins (UgpC), two transmembrane proteins (UgpA and UgpE) and a solute-binding protein (UgpB).

The protein localises to the cell inner membrane. Functionally, part of the ABC transporter complex UgpBAEC involved in sn-glycerol-3-phosphate (G3P) import. Probably responsible for the translocation of the substrate across the membrane. This is sn-glycerol-3-phosphate transport system permease protein UgpE (ugpE) from Brucella abortus (strain 2308).